Consider the following 660-residue polypeptide: Protein SCARECROW 2 (660 aa).

2 disordered regions span residues 1–33 (MGSS…ITSL) and 190–286 (SDPA…KQRD). Residues 192–229 (PAPPPPPPSHPALLPPDATAPPPPPTSVAALPPPPPAQ) are compositionally biased toward pro residues. Residues 259-272 (AAAAAAAAAAAAAA) are compositionally biased toward low complexity. Positions 262-289 (AAAAAAAAAAAAKERKEEQRRKQRDEEG) form a coiled coil. Basic and acidic residues predominate over residues 273 to 286 (AKERKEEQRRKQRD). The region spanning 283–653 (KQRDEEGLHL…LCLLTASAWR (371 aa)) is the GRAS domain. The tract at residues 290-354 (LHLLTLLLQC…VSSCLGLYAP (65 aa)) is leucine repeat I (LRI). A LxCxE motif motif is present at residues 297 to 301 (LQCAE). Residues 373 to 438 (FQVFNGISPF…GGPPRVRLTG (66 aa)) are VHIID. The VHIID signature appears at 404–408 (VHIID). Residues 448-480 (ATGKRLSDFADTLGLPFEFCPVADKAGNLDPEK) are leucine repeat II (LRII). Residues 489-576 (VAVHWLRHSL…QQLLSREIRN (88 aa)) are PFYRE. Residues 579–653 (AVGGPARTGD…LCLLTASAWR (75 aa)) are SAW.

It belongs to the GRAS family.

The protein resides in the cytoplasm. In terms of biological role, probable transcription factor involved in asmmetric cell division in the cortex/endodermis progenitor cell and in the process of stomata and ligule formation in leaves. The protein is Protein SCARECROW 2 (SCR2) of Oryza sativa subsp. indica (Rice).